The following is a 341-amino-acid chain: UDP-N-acetylglucosamine--N-acetylmuramyl-(pentapeptide) pyrophosphoryl-undecaprenol N-acetylglucosamine transferase (341 aa).

UDP-N-acetyl-alpha-D-glucosamine is bound by residues 10 to 12 (TGG), Asn124, Ser177, and Gln275.

It belongs to the glycosyltransferase 28 family. MurG subfamily.

It localises to the cell inner membrane. The enzyme catalyses di-trans,octa-cis-undecaprenyl diphospho-N-acetyl-alpha-D-muramoyl-L-alanyl-D-glutamyl-meso-2,6-diaminopimeloyl-D-alanyl-D-alanine + UDP-N-acetyl-alpha-D-glucosamine = di-trans,octa-cis-undecaprenyl diphospho-[N-acetyl-alpha-D-glucosaminyl-(1-&gt;4)]-N-acetyl-alpha-D-muramoyl-L-alanyl-D-glutamyl-meso-2,6-diaminopimeloyl-D-alanyl-D-alanine + UDP + H(+). It participates in cell wall biogenesis; peptidoglycan biosynthesis. Cell wall formation. Catalyzes the transfer of a GlcNAc subunit on undecaprenyl-pyrophosphoryl-MurNAc-pentapeptide (lipid intermediate I) to form undecaprenyl-pyrophosphoryl-MurNAc-(pentapeptide)GlcNAc (lipid intermediate II). The polypeptide is UDP-N-acetylglucosamine--N-acetylmuramyl-(pentapeptide) pyrophosphoryl-undecaprenol N-acetylglucosamine transferase (Campylobacter hominis (strain ATCC BAA-381 / DSM 21671 / CCUG 45161 / LMG 19568 / NCTC 13146 / CH001A)).